The sequence spans 338 residues: Ketol-acid reductoisomerase (NADP(+)) (338 aa).

The KARI N-terminal Rossmann domain maps to 1–181; the sequence is MRVFYDKDCD…GGGRTGIIET (181 aa). Residues 24–27, R47, S50, T52, and 82–85 contribute to the NADP(+) site; these read YGSQ and DEFQ. Residue H107 is part of the active site. Residue G133 coordinates NADP(+). The KARI C-terminal knotted domain maps to 182-327; the sequence is TFKDETETDL…EKLRAMMPWI (146 aa). Positions 190, 194, 226, and 230 each coordinate Mg(2+). S251 lines the substrate pocket.

Belongs to the ketol-acid reductoisomerase family. The cofactor is Mg(2+).

The enzyme catalyses (2R)-2,3-dihydroxy-3-methylbutanoate + NADP(+) = (2S)-2-acetolactate + NADPH + H(+). It carries out the reaction (2R,3R)-2,3-dihydroxy-3-methylpentanoate + NADP(+) = (S)-2-ethyl-2-hydroxy-3-oxobutanoate + NADPH + H(+). It functions in the pathway amino-acid biosynthesis; L-isoleucine biosynthesis; L-isoleucine from 2-oxobutanoate: step 2/4. It participates in amino-acid biosynthesis; L-valine biosynthesis; L-valine from pyruvate: step 2/4. Involved in the biosynthesis of branched-chain amino acids (BCAA). Catalyzes an alkyl-migration followed by a ketol-acid reduction of (S)-2-acetolactate (S2AL) to yield (R)-2,3-dihydroxy-isovalerate. In the isomerase reaction, S2AL is rearranged via a Mg-dependent methyl migration to produce 3-hydroxy-3-methyl-2-ketobutyrate (HMKB). In the reductase reaction, this 2-ketoacid undergoes a metal-dependent reduction by NADPH to yield (R)-2,3-dihydroxy-isovalerate. The protein is Ketol-acid reductoisomerase (NADP(+)) of Pseudomonas aeruginosa (strain LESB58).